Consider the following 451-residue polypeptide: Tryptophan--tRNA ligase (451 aa).

ATP-binding positions include 10-12 (TTT) and 18-19 (GN). The 'HIGH' region motif lies at 11-19 (TTGTPHLGN). D143 provides a ligand contact to L-tryptophan. ATP is bound by residues 155–157 (GRD), L195, and 202–206 (KMSKS). The 'KMSKS' region motif lies at 202–206 (KMSKS).

Belongs to the class-I aminoacyl-tRNA synthetase family. As to quaternary structure, homodimer.

It localises to the cytoplasm. The enzyme catalyses tRNA(Trp) + L-tryptophan + ATP = L-tryptophyl-tRNA(Trp) + AMP + diphosphate + H(+). Functionally, catalyzes the attachment of tryptophan to tRNA(Trp). This is Tryptophan--tRNA ligase from Bordetella pertussis (strain Tohama I / ATCC BAA-589 / NCTC 13251).